We begin with the raw amino-acid sequence, 175 residues long: Pituitary adenylate cyclase-activating polypeptide (175 aa).

The first 24 residues, Met1–Cys24, serve as a signal peptide directing secretion. The propeptide occupies Ser25–Asp78. Residues Val149–Leu157 form an important for receptor binding region. Leu157 carries the leucine amide modification. A Lysine amide modification is found at Lys168. Residues Ile172–Leu175 constitute a propeptide that is removed on maturation.

This sequence belongs to the glucagon family.

It is found in the secreted. In terms of biological role, PACAP is a neuropeptide involved in diverse array of physiological processes through activating the PACAP subfamily of class B1 G protein-coupled receptors: VIP receptor 1 (VIPR1), VIP receptor 2 (VIPR2), and PACAP type I receptor (ADCYAP1R1). Exerts neuroprotective and general cytoprotective effects due to anti-apoptotic, anti-inflammatory, and antioxidant actions. Promotes neuron projection development through the RAPGEF2/Rap1/B-Raf/ERK pathway. In chromaffin cells, induces long-lasting increase of intracellular calcium concentrations and neuroendocrine secretion. Involved in the control of glucose homeostasis, induces insulin secretion by pancreatic beta cells. PACAP exists in two bioactive forms from proteolysis of the same precursor protein, PACAP27 and PACAP38, which differ by eleven amino acid residues in the C-terminus. This chain is Pituitary adenylate cyclase-activating polypeptide, found in Mus musculus (Mouse).